Reading from the N-terminus, the 240-residue chain is Uridylate kinase (240 aa).

Position 12–15 (12–15) interacts with ATP; sequence KLSG. G54 serves as a coordination point for UMP. G55 and R59 together coordinate ATP. UMP contacts are provided by residues D74 and 135 to 142; that span reads TGNPFFTT. ATP is bound by residues T162, Y168, and D171.

Belongs to the UMP kinase family. As to quaternary structure, homohexamer.

The protein resides in the cytoplasm. The catalysed reaction is UMP + ATP = UDP + ADP. Its pathway is pyrimidine metabolism; CTP biosynthesis via de novo pathway; UDP from UMP (UMPK route): step 1/1. Its activity is regulated as follows. Inhibited by UTP. In terms of biological role, catalyzes the reversible phosphorylation of UMP to UDP. The protein is Uridylate kinase of Xanthomonas oryzae pv. oryzae (strain KACC10331 / KXO85).